A 269-amino-acid chain; its full sequence is Shikimate dehydrogenase (NADP(+)) (269 aa).

Shikimate-binding positions include 17 to 19 (SKS) and threonine 64. Catalysis depends on lysine 68, which acts as the Proton acceptor. Aspartate 80 is a binding site for NADP(+). Residues asparagine 89 and aspartate 105 each contribute to the shikimate site. Residues 130 to 134 (GAGGA), 154 to 159 (NRTHAK), and methionine 213 contribute to the NADP(+) site. Tyrosine 215 serves as a coordination point for shikimate. NADP(+) is bound at residue glycine 237.

The protein belongs to the shikimate dehydrogenase family. In terms of assembly, homodimer.

The catalysed reaction is shikimate + NADP(+) = 3-dehydroshikimate + NADPH + H(+). The protein operates within metabolic intermediate biosynthesis; chorismate biosynthesis; chorismate from D-erythrose 4-phosphate and phosphoenolpyruvate: step 4/7. In terms of biological role, involved in the biosynthesis of the chorismate, which leads to the biosynthesis of aromatic amino acids. Catalyzes the reversible NADPH linked reduction of 3-dehydroshikimate (DHSA) to yield shikimate (SA). The sequence is that of Shikimate dehydrogenase (NADP(+)) from Neisseria polysaccharea.